A 450-amino-acid chain; its full sequence is Phosphoglucosamine mutase (450 aa).

The Phosphoserine intermediate role is filled by Ser-102. Residues Ser-102, Asp-243, Asp-245, and Asp-247 each contribute to the Mg(2+) site. Ser-102 is subject to Phosphoserine.

This sequence belongs to the phosphohexose mutase family. The cofactor is Mg(2+). Activated by phosphorylation.

The catalysed reaction is alpha-D-glucosamine 1-phosphate = D-glucosamine 6-phosphate. Catalyzes the conversion of glucosamine-6-phosphate to glucosamine-1-phosphate. The polypeptide is Phosphoglucosamine mutase (Mesorhizobium japonicum (strain LMG 29417 / CECT 9101 / MAFF 303099) (Mesorhizobium loti (strain MAFF 303099))).